Here is a 107-residue protein sequence, read N- to C-terminus: ATP-dependent Clp protease adapter protein ClpS (107 aa).

It belongs to the ClpS family. Binds to the N-terminal domain of the chaperone ClpA.

Its function is as follows. Involved in the modulation of the specificity of the ClpAP-mediated ATP-dependent protein degradation. This Acinetobacter baylyi (strain ATCC 33305 / BD413 / ADP1) protein is ATP-dependent Clp protease adapter protein ClpS.